A 526-amino-acid chain; its full sequence is Fumitremorgin C synthase (526 aa).

Residues L4 to I24 form a helical membrane-spanning segment. C443 provides a ligand contact to heme.

Belongs to the cytochrome P450 family. Heme serves as cofactor.

The protein resides in the membrane. The catalysed reaction is tryprostatin A + reduced [NADPH--hemoprotein reductase] + O2 = fumitremorgin C + oxidized [NADPH--hemoprotein reductase] + 2 H2O + H(+). Its pathway is mycotoxin biosynthesis. Its function is as follows. Cytochrome P450 monooxygenase; part of the gene cluster that mediates the biosynthesis of fumitremorgins, indole alkaloids that carry not only intriguing chemical structures, but also interesting biological and pharmacological activities. The biosynthesis of fumitremorgin-type alkaloids begins by condensation of the two amino acids L-tryptophan and L-proline to brevianamide F, catalyzed by the non-ribosomal peptide synthetase ftmA. Brevianamide F is then prenylated by the prenyltransferase ftmPT1/ftmB in the presence of dimethylallyl diphosphate, resulting in the formation of tryprostatin B. The three cytochrome P450 monooxygenases, ftmP450-1/ftmC, ftmP450-2/ftmE and ftmP450-3/FtmG, are responsible for the conversion of tryprostatin B to 6-hydroxytryprostatin B, tryprostatin A to fumitremorgin C and fumitremorgin C to 12,13-dihydroxyfumitremorgin C, respectively. The putative methyltransferase ftmMT/ftmD is expected for the conversion of 6-hydroxytryprostatin B to tryprostatin A. FtmPT2/FtmH catalyzes the prenylation of 12,13-dihydroxyfumitre-morgin C in the presence of dimethylallyl diphosphate, resulting in the formation of fumitremorgin B. Fumitremorgin B is further converted to verruculogen by ftmOx1/ftmF via the insertion of an endoperoxide bond between the two prenyl moieties. In some fungal species, verruculogen is further converted to fumitremorgin A, but the enzymes involved in this step have not been identified yet. The polypeptide is Fumitremorgin C synthase (Aspergillus fumigatus (Neosartorya fumigata)).